The primary structure comprises 390 residues: Putative nickel insertion protein (390 aa).

The protein belongs to the LarC family.

The protein is Putative nickel insertion protein of Geotalea uraniireducens (strain Rf4) (Geobacter uraniireducens).